The chain runs to 130 residues: Large ribosomal subunit protein eL22 (130 aa).

A disordered region spans residues 1–21 (MPGKTAQKGGRPSGKGKKKKQ). The Nuclear localization signal signature appears at 17 to 20 (KKKK).

The protein belongs to the eukaryotic ribosomal protein eL22 family.

The protein is Large ribosomal subunit protein eL22 (RPL22) of Tripneustes gratilla (Hawaian sea urchin).